The following is a 331-amino-acid chain: DSC E3 ubiquitin ligase complex subunit D (331 aa).

N26 carries an N-linked (GlcNAc...) asparagine glycan. The next 3 helical transmembrane spans lie at 63-83 (ILIYCELSALYYMDCSVILFA), 107-127 (PFIGAIFVSNIFCMIFHNFFT), and 159-179 (LFLLDFLVLILDLVMLGLIVE). A disordered region spans residues 188–225 (STTSTEILRVQDHDSEERGVHRTRPESRSSVVGAELDE). Residues 196-214 (RVQDHDSEERGVHRTRPES) show a composition bias toward basic and acidic residues.

In terms of assembly, component of the DSC E3 ubiquitin ligase complex composed of dscA, dscB, dscC and dscD.

The protein resides in the endoplasmic reticulum membrane. It functions in the pathway protein modification; protein ubiquitination. Its function is as follows. Component of the DSC E3 ubiquitin ligase complex which is required for the srbA transcriptional activator proteolytic cleavage to release the soluble transcription factor from the membrane in low oxygen or sterol conditions. Required for growth during hypoxia and triazole drug susceptibility, as well as for virulence in a murine model of invasive pulmonary aspergillosis (IPA). The sequence is that of DSC E3 ubiquitin ligase complex subunit D from Aspergillus fumigatus (strain ATCC MYA-4609 / CBS 101355 / FGSC A1100 / Af293) (Neosartorya fumigata).